Reading from the N-terminus, the 268-residue chain is Fc receptor-like protein 6 (268 aa).

The first 16 residues, 1–16 (MLLWMVLLLCESMAEA), serve as a signal peptide directing secretion. Residues 17–215 (QELFPNPELT…TAWIKSNMLP (199 aa)) lie on the Extracellular side of the membrane. An Ig-like C2-type domain is found at 114–194 (PVLTLQHEAT…AKNNISREIS (81 aa)). A disulfide bridge links Cys-135 with Cys-183. 2 N-linked (GlcNAc...) asparagine glycosylation sites follow: Asn-180 and Asn-188. Residues 216–236 (IWLPASLLGGMVIAAVVLMYF) traverse the membrane as a helical segment. At 237 to 268 (FKPCKKHARPETPTLKEPDSFLYVSVDNQRYK) the chain is on the cytoplasmic side.

As to quaternary structure, interacts with class II MHC.

The protein resides in the cell membrane. In terms of biological role, acts as a MHC class II receptor. When stimulated on its own, does not play a role in cytokine production or the release of cytotoxic granules by NK cells and cytotoxic CD8(+) T cells. Does not act as an Fc receptor. This Mus musculus (Mouse) protein is Fc receptor-like protein 6 (Fcrl6).